The sequence spans 652 residues: Epithelial sodium channel subunit gamma (652 aa).

Residues 1 to 54 (MAPGEKIKAKIKKNLPVTGPQAPNIKELMQWYCLNTNTHGCRRIVVSRGRLRRL) lie on the Cytoplasmic side of the membrane. The helical transmembrane segment at 55 to 75 (LWILFTLTAVALIFWQCALLI) threads the bilayer. Over 76–537 (SSFYTVSVSI…EQLLSNIGGQ (462 aa)) the chain is Extracellular. 8 cysteine pairs are disulfide-bonded: cysteine 100–cysteine 286, cysteine 210–cysteine 217, cysteine 263–cysteine 270, cysteine 375–cysteine 460, cysteine 397–cysteine 456, cysteine 401–cysteine 452, cysteine 410–cysteine 437, and cysteine 412–cysteine 426. The tract at residues 137–224 (RKRREAQSWS…SDCAVYTFSS (88 aa)) is gating release of inhibition by proteolysis (GRIP); protease-sensitive region that is responsible for the proteolytic activation of the channel. Asparagine 212 carries N-linked (GlcNAc...) asparagine glycosylation. Asparagine 500 carries N-linked (GlcNAc...) asparagine glycosylation. Residues 538 to 558 (LGLWMSCSVVCVIEIIEVFFI) traverse the membrane as a helical segment. Residues 559–652 (DSLSIIARHQ…LTDTQTTFPH (94 aa)) lie on the Cytoplasmic side of the membrane. The disordered stretch occupies residues 610–631 (SALSLPPAPGSQVPGTPPPRYN). The short motif at 626 to 630 (PPPRY) is the PY motif; recruits WW domain-containing proteins and is thereby required for ubiquitination and inhibition of the channel by NEDD4 and NEDD4L element.

The protein belongs to the amiloride-sensitive sodium channel (TC 1.A.6) family. SCNN1G subfamily. Component of the heterotrimeric epithelial sodium channel (ENaC) composed of an alpha/SCNN1A, a beta/SCNN1B and a gamma/SCNN1G subunit. An additional delta/SCNN1D subunit can replace the alpha/SCNN1A subunit to form an alternative channel with specific properties. Interacts with WWP1 (via WW domains). Interacts with WWP2 (via WW domains); inhibits the channel. Interacts with the full-length immature form of PCSK9 (pro-PCSK9); inhibits ENaC by promoting its proteasomal degradation. Interacts with BPIFA1; the interaction is indirect via SCNN1B and inhibits the proteolytic maturation of SCNN1A and SCNN1G and the activation of ENaC. Phosphorylated on serine and threonine residues. Aldosterone and insulin increase the basal level of phosphorylation. In terms of processing, ubiquitinated. Can be ubiquitinated at multiple sites and undergo monoubiquitination and polyubiquitination. Ubiquitination by NEDD4 or NEDD4L inhibits the ENaC channel through endocytosis, intracellular retention and degradation of its individual subunits. Post-translationally, ENaC is activated through the proteolytic maturation of its subunits. Furin cleaves the SCNN1G subunit first, followed by cleavage by prostasin (PRSS8), which results in a stepwise increase in the open probability of the channel due to the release of an inhibitory tract. BPIFA1, which is recruited by the SCNN1B subunit, prevents the proteolytic activation of ENaC. N-glycosylated. N-linked glycans are processed to complex type during ENaC complex assembly and transport to the plasma membrane.

Its subcellular location is the apical cell membrane. It carries out the reaction Na(+)(in) = Na(+)(out). Originally identified and characterized by its inhibition by the diuretic drug amiloride. Its function is as follows. This is one of the three pore-forming subunits of the heterotrimeric epithelial sodium channel (ENaC), a critical regulator of sodium balance and fluid homeostasis. ENaC operates in epithelial tissues, where it mediates the electrodiffusion of sodium ions from extracellular fluid through the apical membrane of cells, with water following osmotically. It plays a key role in maintaining sodium homeostasis through electrogenic sodium reabsorption in the kidneys. Additionally, ENaC is essential for airway surface liquid homeostasis, which is crucial for proper mucus clearance. This is Epithelial sodium channel subunit gamma from Bos taurus (Bovine).